A 263-amino-acid polypeptide reads, in one-letter code: Triosephosphate isomerase (263 aa).

Asn10–Lys12 provides a ligand contact to substrate. The active-site Electrophile is the His104. The active-site Proton acceptor is the Glu176. Substrate-binding positions include Gly182, Ser221, and Gly242–Gly243.

It belongs to the triosephosphate isomerase family. As to quaternary structure, homodimer.

Its subcellular location is the cytoplasm. It carries out the reaction D-glyceraldehyde 3-phosphate = dihydroxyacetone phosphate. It functions in the pathway carbohydrate biosynthesis; gluconeogenesis. Its pathway is carbohydrate degradation; glycolysis; D-glyceraldehyde 3-phosphate from glycerone phosphate: step 1/1. Involved in the gluconeogenesis. Catalyzes stereospecifically the conversion of dihydroxyacetone phosphate (DHAP) to D-glyceraldehyde-3-phosphate (G3P). The sequence is that of Triosephosphate isomerase from Haemophilus influenzae (strain 86-028NP).